The following is a 242-amino-acid chain: UPF0246 protein SP70585_1589 (242 aa).

The protein belongs to the UPF0246 family.

In Streptococcus pneumoniae (strain 70585), this protein is UPF0246 protein SP70585_1589.